The following is a 155-amino-acid chain: Small ribosomal subunit protein uS7c (155 aa).

This sequence belongs to the universal ribosomal protein uS7 family. As to quaternary structure, part of the 30S ribosomal subunit.

It is found in the plastid. The protein resides in the chloroplast. One of the primary rRNA binding proteins, it binds directly to 16S rRNA where it nucleates assembly of the head domain of the 30S subunit. The polypeptide is Small ribosomal subunit protein uS7c (rps7) (Lilium superbum (Turk's cap lily)).